The primary structure comprises 65 residues: Large ribosomal subunit protein bL35 (65 aa).

Residues 1–23 (MPKMKSNRGAAKRFKRTGSGKFK) are disordered. Positions 10–23 (AAKRFKRTGSGKFK) are enriched in basic residues.

It belongs to the bacterial ribosomal protein bL35 family.

In Acidithiobacillus ferrooxidans (strain ATCC 53993 / BNL-5-31) (Leptospirillum ferrooxidans (ATCC 53993)), this protein is Large ribosomal subunit protein bL35.